A 210-amino-acid polypeptide reads, in one-letter code: Ribosomal RNA small subunit methyltransferase G (210 aa).

S-adenosyl-L-methionine is bound by residues L78, 124-125, and R138; that span reads IE.

It belongs to the methyltransferase superfamily. RNA methyltransferase RsmG family.

It localises to the cytoplasm. It catalyses the reaction guanosine(527) in 16S rRNA + S-adenosyl-L-methionine = N(7)-methylguanosine(527) in 16S rRNA + S-adenosyl-L-homocysteine. Specifically methylates the N7 position of guanine in position 527 of 16S rRNA. The chain is Ribosomal RNA small subunit methyltransferase G from Bordetella bronchiseptica (strain ATCC BAA-588 / NCTC 13252 / RB50) (Alcaligenes bronchisepticus).